The chain runs to 213 residues: MLKRMRDDIKMVFEQDPAARSTLEVITTYAGLHAVWSHLIAHKLYKNRRYVAARMISQLSRFFTGIEIHPGAKIGKRLFIDHGMGVVIGETCTIGDNVTIYQGVTLGGTGKEKGKRHPDIGDNVLIAAGSKILGNIKIESNVNIGANSVVLQSVPSYTTVVGIPGHIVKQEGRRIGKTFDHRNLPDPLYEQIKHLERQLEKAKNGEIQDDYII.

The protein belongs to the transferase hexapeptide repeat family.

The protein resides in the cytoplasm. It carries out the reaction L-serine + acetyl-CoA = O-acetyl-L-serine + CoA. It participates in amino-acid biosynthesis; L-cysteine biosynthesis; L-cysteine from L-serine: step 1/2. This is Serine acetyltransferase (cysE) from Staphylococcus epidermidis (strain ATCC 35984 / DSM 28319 / BCRC 17069 / CCUG 31568 / BM 3577 / RP62A).